The primary structure comprises 136 residues: NADPH-dependent 7-cyano-7-deazaguanine reductase (136 aa).

The active-site Thioimide intermediate is C50. The active-site Proton donor is D57. Residues 72-74 and 91-92 each bind substrate; these read YEL and HE.

This sequence belongs to the GTP cyclohydrolase I family. QueF type 1 subfamily.

The protein localises to the cytoplasm. It carries out the reaction 7-aminomethyl-7-carbaguanine + 2 NADP(+) = 7-cyano-7-deazaguanine + 2 NADPH + 3 H(+). It functions in the pathway tRNA modification; tRNA-queuosine biosynthesis. Catalyzes the NADPH-dependent reduction of 7-cyano-7-deazaguanine (preQ0) to 7-aminomethyl-7-deazaguanine (preQ1). This Prochlorococcus marinus (strain MIT 9301) protein is NADPH-dependent 7-cyano-7-deazaguanine reductase.